The chain runs to 76 residues: Antimicrobial peptide lumbricin-1 (76 aa).

A propeptide spans 1-14 (MSLCISDYLYLTLT) (removed in mature form).

Displays antimicrobial activity against the Gram-positive bacteria B.subtilis ATCC 62037, S.aureus ATCC 15752 and S.mutans ATCC 25175, the Gram-negative bacteria E.coli ATCC 27325, P.putida ATCC 17426 and Serratia sp. ATCC 21074, and the fungi C.albicans ATCC 10231, C.neoformans ATCC 34881 and S.cerevisiae ATCC 44774. Does not possess hemolytic activity. This chain is Antimicrobial peptide lumbricin-1, found in Lumbricus rubellus (Humus earthworm).